A 354-amino-acid chain; its full sequence is Chorismate synthase (354 aa).

An NADP(+)-binding site is contributed by arginine 48. FMN is bound by residues 125-127 (RSS), 239-240 (NA), glycine 280, 295-299 (KPVAT), and arginine 321.

The protein belongs to the chorismate synthase family. As to quaternary structure, homotetramer. FMNH2 is required as a cofactor.

The enzyme catalyses 5-O-(1-carboxyvinyl)-3-phosphoshikimate = chorismate + phosphate. The protein operates within metabolic intermediate biosynthesis; chorismate biosynthesis; chorismate from D-erythrose 4-phosphate and phosphoenolpyruvate: step 7/7. Catalyzes the anti-1,4-elimination of the C-3 phosphate and the C-6 proR hydrogen from 5-enolpyruvylshikimate-3-phosphate (EPSP) to yield chorismate, which is the branch point compound that serves as the starting substrate for the three terminal pathways of aromatic amino acid biosynthesis. This reaction introduces a second double bond into the aromatic ring system. The chain is Chorismate synthase from Christiangramia forsetii (strain DSM 17595 / CGMCC 1.15422 / KT0803) (Gramella forsetii).